We begin with the raw amino-acid sequence, 184 residues long: ATP-dependent protease subunit HslV (184 aa).

The active site involves T12. Residues A166, C169, and T172 each coordinate Na(+).

Belongs to the peptidase T1B family. HslV subfamily. As to quaternary structure, a double ring-shaped homohexamer of HslV is capped on each side by a ring-shaped HslU homohexamer. The assembly of the HslU/HslV complex is dependent on binding of ATP.

Its subcellular location is the cytoplasm. It catalyses the reaction ATP-dependent cleavage of peptide bonds with broad specificity.. Allosterically activated by HslU binding. In terms of biological role, protease subunit of a proteasome-like degradation complex believed to be a general protein degrading machinery. The sequence is that of ATP-dependent protease subunit HslV from Brucella canis (strain ATCC 23365 / NCTC 10854 / RM-666).